The sequence spans 264 residues: Apolipoprotein A-I (264 aa).

An N-terminal signal peptide occupies residues 1-18 (MKAVVLAVAVLFLTGSQA). Repeat copies occupy residues 67-88 (LKLL…ADLG) and 89-110 (PVTQ…QEMN). The segment at 67-264 (LKLLDNWDTL…DQATKQLTAQ (198 aa)) is 10 X approximate tandem repeats. At Met-109 the chain carries Methionine sulfoxide. A 3; half-length repeat occupies 111 to 121 (KDLQEVKQKVQ). 5 consecutive repeat copies span residues 122–143 (PYLD…EKVG), 144–165 (PLGT…EKLT), 166–187 (PLGE…TQLA), 188–207 (PYSD…LRDS), and 208–229 (TTFA…EKAK). A 9; half-length repeat occupies 230-240 (PALEDLRQGLL). Residues 241 to 264 (PVLESLKASILSSIDQATKQLTAQ) form repeat 10.

It belongs to the apolipoprotein A1/A4/E family. In terms of assembly, homodimer. Interacts with APOA1BP and CLU. Component of a sperm activating protein complex (SPAP), consisting of APOA1, an immunoglobulin heavy chain, an immunoglobulin light chain and albumin. Interacts with NDRG1. Interacts with SCGB3A2. Interacts with NAXE and YJEFN3. In terms of processing, glycosylated. Post-translationally, palmitoylated. Phosphorylation sites are present in the extracellular medium.

It localises to the secreted. Participates in the reverse transport of cholesterol from tissues to the liver for excretion by promoting cholesterol efflux from tissues and by acting as a cofactor for the lecithin cholesterol acyltransferase (LCAT). As part of the SPAP complex, activates spermatozoa motility. The chain is Apolipoprotein A-I (APOA1) from Chinchilla lanigera (Long-tailed chinchilla).